Here is a 137-residue protein sequence, read N- to C-terminus: Large ribosomal subunit protein uL14A (137 aa).

Serine 2 is modified (N-acetylserine). Residues lysine 106 and lysine 110 each carry the N6,N6-dimethyllysine; by RKM1 modification.

This sequence belongs to the universal ribosomal protein uL14 family. In terms of assembly, component of the large ribosomal subunit (LSU). Mature yeast ribosomes consist of a small (40S) and a large (60S) subunit. The 40S small subunit contains 1 molecule of ribosomal RNA (18S rRNA) and 33 different proteins (encoded by 57 genes). The large 60S subunit contains 3 rRNA molecules (25S, 5.8S and 5S rRNA) and 46 different proteins (encoded by 81 genes). In terms of processing, methylated by RKM1 at 2 different sites, but it is unclear which are the 2 methylated residues among Lys-40, Lys-106 and/or Lys-110.

The protein localises to the cytoplasm. In terms of biological role, component of the ribosome, a large ribonucleoprotein complex responsible for the synthesis of proteins in the cell. The small ribosomal subunit (SSU) binds messenger RNAs (mRNAs) and translates the encoded message by selecting cognate aminoacyl-transfer RNA (tRNA) molecules. The large subunit (LSU) contains the ribosomal catalytic site termed the peptidyl transferase center (PTC), which catalyzes the formation of peptide bonds, thereby polymerizing the amino acids delivered by tRNAs into a polypeptide chain. The nascent polypeptides leave the ribosome through a tunnel in the LSU and interact with protein factors that function in enzymatic processing, targeting, and the membrane insertion of nascent chains at the exit of the ribosomal tunnel. The polypeptide is Large ribosomal subunit protein uL14A (Saccharomyces cerevisiae (strain ATCC 204508 / S288c) (Baker's yeast)).